We begin with the raw amino-acid sequence, 308 residues long: Bifunctional protein FolD (308 aa).

NADP(+)-binding positions include 175–177, Ser200, and Ile241; that span reads GRS.

Belongs to the tetrahydrofolate dehydrogenase/cyclohydrolase family. Homodimer.

It carries out the reaction (6R)-5,10-methylene-5,6,7,8-tetrahydrofolate + NADP(+) = (6R)-5,10-methenyltetrahydrofolate + NADPH. It catalyses the reaction (6R)-5,10-methenyltetrahydrofolate + H2O = (6R)-10-formyltetrahydrofolate + H(+). It participates in one-carbon metabolism; tetrahydrofolate interconversion. Functionally, catalyzes the oxidation of 5,10-methylenetetrahydrofolate to 5,10-methenyltetrahydrofolate and then the hydrolysis of 5,10-methenyltetrahydrofolate to 10-formyltetrahydrofolate. This Jannaschia sp. (strain CCS1) protein is Bifunctional protein FolD.